We begin with the raw amino-acid sequence, 647 residues long: Macrolide export ATP-binding/permease protein MacB (647 aa).

The ABC transporter domain maps to 5 to 243 (LELKGIERSY…TQTPSLTSKI (239 aa)). 41–48 (GASGSGKS) provides a ligand contact to ATP. 4 consecutive transmembrane segments (helical) span residues 272 to 292 (LLTMLGIIIGIASVVTILVIG), 522 to 542 (LFLTMVAVISLIVGGIGVMNI), 576 to 596 (ILVCLVGGVLGIGLSYTIAFI), and 610 to 630 (PIALLSAFACSTAIGVIFGFL).

This sequence belongs to the ABC transporter superfamily. Macrolide exporter (TC 3.A.1.122) family. Homodimer. Part of the tripartite efflux system MacAB-TolC, which is composed of an inner membrane transporter, MacB, a periplasmic membrane fusion protein, MacA, and an outer membrane component, TolC. The complex forms a large protein conduit and can translocate molecules across both the inner and outer membranes. Interacts with MacA.

Its subcellular location is the cell inner membrane. Part of the tripartite efflux system MacAB-TolC. MacB is a non-canonical ABC transporter that contains transmembrane domains (TMD), which form a pore in the inner membrane, and an ATP-binding domain (NBD), which is responsible for energy generation. Confers resistance against macrolides. This chain is Macrolide export ATP-binding/permease protein MacB, found in Photorhabdus laumondii subsp. laumondii (strain DSM 15139 / CIP 105565 / TT01) (Photorhabdus luminescens subsp. laumondii).